Reading from the N-terminus, the 671-residue chain is Acetyl-coenzyme A synthetase 2 (671 aa).

CoA-binding positions include 207–210 (RGGR) and Thr-326. Residues 402–404 (GEP), 426–431 (DTYWQT), Asp-517, and Arg-532 each bind ATP. CoA is bound at residue Ser-540. An ATP-binding site is contributed by Arg-543. Residue Arg-603 coordinates CoA.

Belongs to the ATP-dependent AMP-binding enzyme family.

The enzyme catalyses acetate + ATP + CoA = acetyl-CoA + AMP + diphosphate. In Candida albicans (strain SC5314 / ATCC MYA-2876) (Yeast), this protein is Acetyl-coenzyme A synthetase 2 (ACS2).